The primary structure comprises 388 residues: Leucine aminopeptidase 1 (388 aa).

A signal peptide spans 1–19 (MKVLTAIALSAIAFTGAVA). Positions 20-88 (AVITQEAFLN…YPTLHSASYV (69 aa)) are excised as a propeptide. Residues Asn-106 and Asn-180 are each glycosylated (N-linked (GlcNAc...) asparagine). 2 residues coordinate Zn(2+): His-188 and Asp-207. N-linked (GlcNAc...) asparagine glycosylation is present at Asn-232. Residues Glu-246 and Asp-273 each contribute to the Zn(2+) site. A disulfide bond links Cys-322 and Cys-326. His-355 contributes to the Zn(2+) binding site.

This sequence belongs to the peptidase M28 family. M28E subfamily. Monomer. Zn(2+) serves as cofactor.

The protein resides in the secreted. Its function is as follows. Extracellular aminopeptidase that allows assimilation of proteinaceous substrates and which contributes to pathogenicity. The chain is Leucine aminopeptidase 1 (lap1) from Aspergillus fumigatus (strain CBS 144.89 / FGSC A1163 / CEA10) (Neosartorya fumigata).